Here is a 291-residue protein sequence, read N- to C-terminus: Probable prolyl 4-hydroxylase 12 (291 aa).

Residues 1–156 lie on the Cytoplasmic side of the membrane; it reads MACLSRIFLI…GEEPSSVLHE (156 aa). Residues 125 to 239 form the Fe2OG dioxygenase domain; the sequence is NGGSIKVRSY…LLVATKLIYA (115 aa). The Fe cation site is built by K142 and D144. A helical; Signal-anchor for type II membrane protein membrane pass occupies residues 157 to 173; that stretch reads SLLATVVLYLSNTTQGG. The Lumenal segment spans residues 174–291; that stretch reads ELLFPNSEMK…GTCRKSCNAC (118 aa). N211 carries N-linked (GlcNAc...) asparagine glycosylation. H220 lines the Fe cation pocket. The 41-residue stretch at 251-291 folds into the ShKT domain; the sequence is CSDEDENCGRWAKLGECKKNPVYMIGSPDYYGTCRKSCNAC. Cystine bridges form between C251/C291, C258/C284, and C267/C288.

The protein belongs to the P4HA family. Fe(2+) serves as cofactor. The cofactor is L-ascorbate.

Its subcellular location is the endoplasmic reticulum membrane. The catalysed reaction is L-prolyl-[collagen] + 2-oxoglutarate + O2 = trans-4-hydroxy-L-prolyl-[collagen] + succinate + CO2. Its function is as follows. Catalyzes the post-translational formation of 4-hydroxyproline in -Xaa-Pro-Gly- sequences in proline-rich peptide sequences of plant glycoproteins and other proteins. Hydroxyprolines are important constituent of many plant cell wall glycoproteins such as extensins, hydroxyproline-rich glycoproteins, lectins and arabinogalactan proteins. In Arabidopsis thaliana (Mouse-ear cress), this protein is Probable prolyl 4-hydroxylase 12.